Consider the following 289-residue polypeptide: Phospholipase A1 (289 aa).

Positions 1-20 (MRAILRGLLPATLLPLAAYA) are cleaved as a signal peptide. The Periplasmic segment spans residues 21-52 (QEATIKEVHDAPAVRGSIIANMLQEHDNPFTL). The beta stranded transmembrane segment at 53 to 65 (YPYDTNYLIYTNT) threads the bilayer. At 66–84 (SDLNKEAISTYNWSENARK) the chain is on the extracellular side. A beta stranded transmembrane segment spans residues 85–99 (DEVKFQLSLAFPLWR). The Periplasmic portion of the chain corresponds to 100 to 105 (GILGPN). The chain crosses the membrane as a beta stranded span at residues 106–118 (SVLGASYTQKSWW). Residues 119-128 (QLSNSKESSP) are Extracellular-facing. Residue serine 126 coordinates Ca(2+). Residues 129–148 (FRETNYEPQLFLGFATDYRF) traverse the membrane as a beta stranded segment. The Periplasmic portion of the chain corresponds to 149-150 (AG). A beta stranded transmembrane segment spans residues 151–164 (WTLRDVEMGYNHDS). Histidine 162 acts as the Proton acceptor in catalysis. The active-site Nucleophile is serine 164. The Extracellular segment spans residues 165–173 (NGRSDPTSR). Residues arginine 167 and serine 172 each coordinate Ca(2+). A beta stranded transmembrane segment spans residues 174–186 (SWNRLYTRLMAEN). Over 187-188 (GN) the chain is Periplasmic. The chain crosses the membrane as a beta stranded span at residues 189–198 (WLVEVKPWYV). At 199–216 (IGSTDDNPDITKYMGYYQ) the chain is on the extracellular side. Aspartate 204 lines the Ca(2+) pocket. The beta stranded transmembrane segment at 217–223 (LKIGYHL) threads the bilayer. Residues 224–225 (GE) are Periplasmic-facing. The chain crosses the membrane as a beta stranded span at residues 226-234 (AVLSAKGQY). The Extracellular portion of the chain corresponds to 235–241 (NWNTGYG). Residues 242 to 250 (GAEVGLSYP) traverse the membrane as a beta stranded segment. Residues 251 to 255 (VTKHV) are Periplasmic-facing. The beta stranded transmembrane segment at 256–265 (RLYTQVYSGY) threads the bilayer. Residues 266 to 274 (GESLIDYNF) are Extracellular-facing. A beta stranded transmembrane segment spans residues 275-286 (NQTRVGVGVMLN). The Periplasmic segment spans residues 287–289 (DIF).

Belongs to the phospholipase A1 family. As to quaternary structure, homodimer; dimerization is reversible, and the dimeric form is the active one. It depends on Ca(2+) as a cofactor.

The protein resides in the cell outer membrane. It carries out the reaction a 1,2-diacyl-sn-glycero-3-phosphocholine + H2O = a 2-acyl-sn-glycero-3-phosphocholine + a fatty acid + H(+). The catalysed reaction is a 1,2-diacyl-sn-glycero-3-phosphocholine + H2O = a 1-acyl-sn-glycero-3-phosphocholine + a fatty acid + H(+). Its function is as follows. Hydrolysis of phosphatidylcholine with phospholipase A2 (EC 3.1.1.4) and phospholipase A1 (EC 3.1.1.32) activities. This chain is Phospholipase A1 (pldA), found in Salmonella typhi.